Here is a 231-residue protein sequence, read N- to C-terminus: Small ribosomal subunit protein uS3 (231 aa).

The KH type-2 domain occupies 39-107; it reads IRKFLKAKLY…DVTINIKEER (69 aa).

Belongs to the universal ribosomal protein uS3 family. Part of the 30S ribosomal subunit. Forms a tight complex with proteins S10 and S14.

In terms of biological role, binds the lower part of the 30S subunit head. Binds mRNA in the 70S ribosome, positioning it for translation. The chain is Small ribosomal subunit protein uS3 from Campylobacter hominis (strain ATCC BAA-381 / DSM 21671 / CCUG 45161 / LMG 19568 / NCTC 13146 / CH001A).